The sequence spans 932 residues: Protein translocase subunit SecA (932 aa).

Residues Gln-87, 105–109, and Asp-515 each bind ATP; that span reads GEGKT. Zn(2+) is bound by residues Cys-916, Cys-918, Cys-927, and His-928.

This sequence belongs to the SecA family. In terms of assembly, monomer and homodimer. Part of the essential Sec protein translocation apparatus which comprises SecA, SecYEG and auxiliary proteins SecDF-YajC and YidC. It depends on Zn(2+) as a cofactor.

It is found in the cell inner membrane. The protein localises to the cytoplasm. It carries out the reaction ATP + H2O + cellular proteinSide 1 = ADP + phosphate + cellular proteinSide 2.. Its function is as follows. Part of the Sec protein translocase complex. Interacts with the SecYEG preprotein conducting channel. Has a central role in coupling the hydrolysis of ATP to the transfer of proteins into and across the cell membrane, serving both as a receptor for the preprotein-SecB complex and as an ATP-driven molecular motor driving the stepwise translocation of polypeptide chains across the membrane. The sequence is that of Protein translocase subunit SecA from Burkholderia orbicola (strain AU 1054).